Reading from the N-terminus, the 604-residue chain is Phosphomethylpyrimidine synthase (604 aa).

Substrate contacts are provided by residues N218, M247, Y276, H312, 332-334 (SRG), 373-376 (DGLR), and E412. Residue H416 participates in Zn(2+) binding. Residue Y439 coordinates substrate. H480 contributes to the Zn(2+) binding site. Residues C560, C563, and C568 each coordinate [4Fe-4S] cluster.

It belongs to the ThiC family. As to quaternary structure, homodimer. [4Fe-4S] cluster is required as a cofactor.

The enzyme catalyses 5-amino-1-(5-phospho-beta-D-ribosyl)imidazole + S-adenosyl-L-methionine = 4-amino-2-methyl-5-(phosphooxymethyl)pyrimidine + CO + 5'-deoxyadenosine + formate + L-methionine + 3 H(+). It participates in cofactor biosynthesis; thiamine diphosphate biosynthesis. Functionally, catalyzes the synthesis of the hydroxymethylpyrimidine phosphate (HMP-P) moiety of thiamine from aminoimidazole ribotide (AIR) in a radical S-adenosyl-L-methionine (SAM)-dependent reaction. This Zymomonas mobilis subsp. mobilis (strain ATCC 31821 / ZM4 / CP4) protein is Phosphomethylpyrimidine synthase.